The chain runs to 102 residues: Large ribosomal subunit protein bL21 (102 aa).

It belongs to the bacterial ribosomal protein bL21 family. As to quaternary structure, part of the 50S ribosomal subunit. Contacts protein L20.

Its function is as follows. This protein binds to 23S rRNA in the presence of protein L20. This Levilactobacillus brevis (strain ATCC 367 / BCRC 12310 / CIP 105137 / JCM 1170 / LMG 11437 / NCIMB 947 / NCTC 947) (Lactobacillus brevis) protein is Large ribosomal subunit protein bL21.